A 122-amino-acid chain; its full sequence is MSITKDQILEAFAAMSVMEVVELIEAMEEKFGVSAAAAVVSGGGEAAAAVEEQTEFNVILTAHGDNKVAVIKAIRGATGLGLKEAKAMSEAAPVAVKEGVSKEEAEALKKELVEAGASVEIK.

This sequence belongs to the bacterial ribosomal protein bL12 family. As to quaternary structure, homodimer. Part of the ribosomal stalk of the 50S ribosomal subunit. Forms a multimeric L10(L12)X complex, where L10 forms an elongated spine to which 2 to 4 L12 dimers bind in a sequential fashion. Binds GTP-bound translation factors.

Forms part of the ribosomal stalk which helps the ribosome interact with GTP-bound translation factors. Is thus essential for accurate translation. The chain is Large ribosomal subunit protein bL12 from Shewanella putrefaciens (strain CN-32 / ATCC BAA-453).